The sequence spans 262 residues: MKITVNTLHKLAEEGRKITMLTCYDASFASLLDEAGVEILLVGDSLGPVMQGVDSTLPVSEEDMLYHIRCVARGAKNALILGDMTFGAYQESPQQAFAHAARLLQAGAHMVKLEGGAYMAETTRFLVERGIPVCSHIGLTPQYVNMFGGYRVQGRGEDAQRILNDAKVLAEAGASLVLMECVPAPLAKEITETVKAPTIGIGAGADTSGQVLVLHDMLGVYPGKKAKFVKNFMEEAGSIQGAVQAYIKAVKDKTFPAEEHTY.

Asp44 and Asp83 together coordinate Mg(2+). 3-methyl-2-oxobutanoate contacts are provided by residues 44–45, Asp83, and Lys112; that span reads DS. Position 114 (Glu114) interacts with Mg(2+). Glu180 (proton acceptor) is an active-site residue.

This sequence belongs to the PanB family. Homodecamer; pentamer of dimers. Mg(2+) serves as cofactor.

Its subcellular location is the cytoplasm. It carries out the reaction 3-methyl-2-oxobutanoate + (6R)-5,10-methylene-5,6,7,8-tetrahydrofolate + H2O = 2-dehydropantoate + (6S)-5,6,7,8-tetrahydrofolate. It participates in cofactor biosynthesis; (R)-pantothenate biosynthesis; (R)-pantoate from 3-methyl-2-oxobutanoate: step 1/2. Functionally, catalyzes the reversible reaction in which hydroxymethyl group from 5,10-methylenetetrahydrofolate is transferred onto alpha-ketoisovalerate to form ketopantoate. The chain is 3-methyl-2-oxobutanoate hydroxymethyltransferase from Chromobacterium violaceum (strain ATCC 12472 / DSM 30191 / JCM 1249 / CCUG 213 / NBRC 12614 / NCIMB 9131 / NCTC 9757 / MK).